We begin with the raw amino-acid sequence, 240 residues long: Ribonuclease 3 (240 aa).

Positions 9 to 141 constitute an RNase III domain; sequence VEEFQKKTGI…LLAAIYLDQG (133 aa). Glu-54 is a binding site for Mg(2+). Residue Asp-58 is part of the active site. Residues Asp-127 and Glu-130 each coordinate Mg(2+). Glu-130 is a catalytic residue. In terms of domain architecture, DRBM spans 168–237; the sequence is DYKTALQEIV…ARIAYEKLLK (70 aa).

This sequence belongs to the ribonuclease III family. Homodimer. Mg(2+) serves as cofactor.

The protein localises to the cytoplasm. It catalyses the reaction Endonucleolytic cleavage to 5'-phosphomonoester.. Functionally, digests double-stranded RNA. Involved in the processing of primary rRNA transcript to yield the immediate precursors to the large and small rRNAs (23S and 16S). Processes some mRNAs, and tRNAs when they are encoded in the rRNA operon. Processes pre-crRNA and tracrRNA of type II CRISPR loci if present in the organism. The protein is Ribonuclease 3 of Thermotoga sp. (strain RQ2).